The following is a 120-amino-acid chain: NAD(P)H-quinone oxidoreductase subunit 3, chloroplastic (120 aa).

A run of 3 helical transmembrane segments spans residues 7–27 (YQTF…ALLI), 64–84 (SFAL…PWAM), and 89–109 (LGIF…IGLV).

The protein belongs to the complex I subunit 3 family. NDH is composed of at least 16 different subunits, 5 of which are encoded in the nucleus.

Its subcellular location is the plastid. It is found in the chloroplast thylakoid membrane. The catalysed reaction is a plastoquinone + NADH + (n+1) H(+)(in) = a plastoquinol + NAD(+) + n H(+)(out). It catalyses the reaction a plastoquinone + NADPH + (n+1) H(+)(in) = a plastoquinol + NADP(+) + n H(+)(out). In terms of biological role, NDH shuttles electrons from NAD(P)H:plastoquinone, via FMN and iron-sulfur (Fe-S) centers, to quinones in the photosynthetic chain and possibly in a chloroplast respiratory chain. The immediate electron acceptor for the enzyme in this species is believed to be plastoquinone. Couples the redox reaction to proton translocation, and thus conserves the redox energy in a proton gradient. This chain is NAD(P)H-quinone oxidoreductase subunit 3, chloroplastic, found in Psilotum nudum (Whisk fern).